Reading from the N-terminus, the 94-residue chain is Pyrimidine/purine nucleoside phosphorylase (94 aa).

The protein belongs to the nucleoside phosphorylase PpnP family.

The catalysed reaction is a purine D-ribonucleoside + phosphate = a purine nucleobase + alpha-D-ribose 1-phosphate. It catalyses the reaction adenosine + phosphate = alpha-D-ribose 1-phosphate + adenine. It carries out the reaction cytidine + phosphate = cytosine + alpha-D-ribose 1-phosphate. The enzyme catalyses guanosine + phosphate = alpha-D-ribose 1-phosphate + guanine. The catalysed reaction is inosine + phosphate = alpha-D-ribose 1-phosphate + hypoxanthine. It catalyses the reaction thymidine + phosphate = 2-deoxy-alpha-D-ribose 1-phosphate + thymine. It carries out the reaction uridine + phosphate = alpha-D-ribose 1-phosphate + uracil. The enzyme catalyses xanthosine + phosphate = alpha-D-ribose 1-phosphate + xanthine. Catalyzes the phosphorolysis of diverse nucleosides, yielding D-ribose 1-phosphate and the respective free bases. Can use uridine, adenosine, guanosine, cytidine, thymidine, inosine and xanthosine as substrates. Also catalyzes the reverse reactions. This is Pyrimidine/purine nucleoside phosphorylase from Pseudomonas entomophila (strain L48).